A 508-amino-acid polypeptide reads, in one-letter code: Photosystem II CP47 reaction center protein (508 aa).

6 consecutive transmembrane segments (helical) span residues 21–36 (AVHIMHTALVSGWAGS), 101–115 (IVFSGLCFLAAIWHW), 140–156 (GIHLFLAGVACFGFGAF), 203–218 (IAAGTLGILAGLFHLS), 237–252 (VLSSSIAAVFFAAFVV), and 457–472 (TFALLFFFGHIWHGAR).

Belongs to the PsbB/PsbC family. PsbB subfamily. In terms of assembly, PSII is composed of 1 copy each of membrane proteins PsbA, PsbB, PsbC, PsbD, PsbE, PsbF, PsbH, PsbI, PsbJ, PsbK, PsbL, PsbM, PsbT, PsbX, PsbY, PsbZ, Psb30/Ycf12, at least 3 peripheral proteins of the oxygen-evolving complex and a large number of cofactors. It forms dimeric complexes. It depends on Binds multiple chlorophylls. PSII binds additional chlorophylls, carotenoids and specific lipids. as a cofactor.

It is found in the plastid. Its subcellular location is the chloroplast thylakoid membrane. One of the components of the core complex of photosystem II (PSII). It binds chlorophyll and helps catalyze the primary light-induced photochemical processes of PSII. PSII is a light-driven water:plastoquinone oxidoreductase, using light energy to abstract electrons from H(2)O, generating O(2) and a proton gradient subsequently used for ATP formation. This is Photosystem II CP47 reaction center protein from Triticum aestivum (Wheat).